Reading from the N-terminus, the 283-residue chain is Shikimate kinase (283 aa).

86–96 provides a ligand contact to ATP; sequence PLKSGLSSSSA.

The protein belongs to the GHMP kinase family. Archaeal shikimate kinase subfamily.

The protein localises to the cytoplasm. The enzyme catalyses shikimate + ATP = 3-phosphoshikimate + ADP + H(+). Its pathway is metabolic intermediate biosynthesis; chorismate biosynthesis; chorismate from D-erythrose 4-phosphate and phosphoenolpyruvate: step 5/7. This chain is Shikimate kinase, found in Methanococcus vannielii (strain ATCC 35089 / DSM 1224 / JCM 13029 / OCM 148 / SB).